The primary structure comprises 859 residues: DNA mismatch repair protein MutS (859 aa).

622-629 (GPNMGGKS) is a binding site for ATP.

The protein belongs to the DNA mismatch repair MutS family.

This protein is involved in the repair of mismatches in DNA. It is possible that it carries out the mismatch recognition step. This protein has a weak ATPase activity. The chain is DNA mismatch repair protein MutS from Syntrophomonas wolfei subsp. wolfei (strain DSM 2245B / Goettingen).